The sequence spans 1465 residues: Claspin (1465 aa).

Low complexity predominate over residues M1–A12. Disordered regions lie at residues M1–V490, A544–M566, and A585–M636. Phosphoserine is present on residues S45, S49, S52, S64, S75, S109, and S114. The span at Q121 to Q133 shows a compositional bias: basic and acidic residues. A compositionally biased stretch (basic residues) spans K154 to K163. Positions E205 to A216 are enriched in basic and acidic residues. Residues K217 to Q228 are compositionally biased toward basic residues. Basic and acidic residues-rich tracts occupy residues K229 to K246, K254 to S263, E273 to K286, and T296 to V335. A coiled-coil region spans residues K260–D281. Positions K336–Q346 are enriched in basic residues. Phosphoserine is present on residues S350 and S354. Positions Q358–S373 are enriched in basic and acidic residues. The segment covering N375–M388 has biased composition (acidic residues). S381, S404, S406, S432, S434, S444, S456, S458, and S468 each carry phosphoserine. The span at Q400–K417 shows a compositional bias: basic and acidic residues. Positions S432–E441 are enriched in acidic residues. The segment covering S456–G470 has biased composition (acidic residues). The stretch at L564–E587 forms a coiled coil. Acidic residues predominate over residues E594–P606. Residue T693 is modified to Phosphothreonine. The stretch at L839–E874 forms a coiled coil. The span at M845–M859 shows a compositional bias: basic and acidic residues. Positions M845–S977 are disordered. Composition is skewed to acidic residues over residues A860 to P875, A913 to P942, and D960 to D969. Residue S963 is modified to Phosphoserine. Residue T973 is modified to Phosphothreonine. S990 bears the Phosphoserine mark. The disordered stretch occupies residues C1058–T1154. The segment covering P1067–E1076 has biased composition (low complexity). Residues S1093 and S1094 each carry the phosphoserine modification. Residues S1094–L1103 show a composition bias toward acidic residues. Residues R1109–K1123 are compositionally biased toward basic residues. Residues S1127–T1154 are compositionally biased toward acidic residues. The residue at position 1287 (S1287) is a Phosphoserine.

It belongs to the claspin family. Post-translationally, phosphorylated in response to DNA damage by IR and HU treatment. Phosphorylation does not require mei-41 or tefu. In terms of tissue distribution, detected in the ovary but not in the testis (at protein level).

It is found in the nucleus. Required for checkpoint signaling in response to DNA replication stress; either resulting from normal embryogenesis or induced by the DNA synthesis inhibitor hydroxyurea (HU). It is not required for the G2 arrest resulting from DNA double strand breaks induced by ionizing irradiation (IR). Necessary for the timely phosphorylation of Cdk1 at the mid-blastula transition. May have a minor role in maintaining genomic stability in mitotic cells. The chain is Claspin from Drosophila melanogaster (Fruit fly).